The following is a 171-amino-acid chain: Vimentin-type intermediate filament-associated coiled-coil protein (171 aa).

The stretch at 7 to 98 (LQIREANAHL…QRDQMIQELQ (92 aa)) forms a coiled coil. A disordered region spans residues 126–171 (ELGPLPSSHSHGAQLLPDGPGPPLGNSMREEEGQDDQQPAVFGTTV).

As to expression, expressed in brain, heart, kidney, liver, lung, skeletal muscle, spleen and testis. Within the kidney expression is pronounced within glomeruli.

The protein resides in the cytoplasm. The chain is Vimentin-type intermediate filament-associated coiled-coil protein (Vmac) from Rattus norvegicus (Rat).